We begin with the raw amino-acid sequence, 750 residues long: Iron-sulfur clusters transporter ATM1, mitochondrial (750 aa).

The transit peptide at 1–16 directs the protein to the mitochondrion; that stretch reads MFIRNVKLIKPSPVRF. Over 17–124 the chain is Mitochondrial matrix; that stretch reads ISPIPFSFPI…PKNNLNFKIR (108 aa). Low complexity-rich tracts occupy residues 43–75 and 87–100; these read TSNF…KTLS and DNDT…SSEN. The interval 43 to 100 is disordered; the sequence is TSNFKSTSSSSSLKSTSTSTSTSTSKTTPKTLSKPPPKVKPPIQDNDTTSSGSSSSEN. A helical transmembrane segment spans residues 125 to 146; sequence VIIALSLLVGAKILNVQVPFYF. The ABC transmembrane type-1 domain occupies 125 to 415; sequence VIIALSLLVG…LGSVYRELKQ (291 aa). The Mitochondrial intermembrane segment spans residues 147-169; it reads KQIIDTMNIDWTNEVGVFSTVIG. The chain crosses the membrane as a helical span at residues 170–193; sequence SLILAYGGARFGAVLFGELRNAIF. The Mitochondrial matrix segment spans residues 194 to 242; the sequence is ASVAQSAIRRVAYNTFVKLLNMDLQFHLSRQTGGLTRAIDRGTKGISYV. A helical membrane pass occupies residues 243–266; sequence LSAMVFHIIPITLEISIVCGILTY. A topological domain (mitochondrial intermembrane) is located at residue N267. The chain crosses the membrane as a helical span at residues 268–288; sequence YGASFAAMTFVTMLAYSIFTI. Topologically, residues 289–354 are mitochondrial matrix; the sequence is QTTAWRTKFR…SSVKIATSLA (66 aa). Glutathione-binding positions include 294-298 and 357-360; these read RTKFR and NSGQ. Residues 355–373 traverse the membrane as a helical segment; sequence FLNSGQNFIFTSALTAMMY. The Mitochondrial intermembrane segment spans residues 374-388; it reads MGCQGVYTGELTVGD. A helical membrane pass occupies residues 389–410; that stretch reads LVLINQLVFQLSVPLNFLGSVY. G407 contacts glutathione. The Mitochondrial matrix segment spans residues 411–750; sequence RELKQSLLDM…LFNSQTFEKK (340 aa). The segment at 437 to 462 is disordered; it reads PNAPPLKLNNNNNNNNNNNNNNNNSL. A compositionally biased stretch (low complexity) spans 445-460; it reads NNNNNNNNNNNNNNNN. An ABC transporter domain is found at 466 to 702; the sequence is IRFENVSFGY…QPNSLYAQLW (237 aa). ATP contacts are provided by residues Y475 and 499–510; that span reads GPSGSGKSTILR.

The protein belongs to the ABC transporter superfamily. ABCB family. Heavy Metal importer (TC 3.A.1.210) subfamily. As to quaternary structure, homodimer.

It is found in the mitochondrion inner membrane. Functionally, performs an essential function in the generation of cytoplasmic iron-sulfur proteins by mediating the ATP-dependent export of Fe/S cluster precursors synthesized by NFS1 and other mitochondrial proteins. Hydrolyzes ATP. Binds glutathione and may function by transporting a glutathione-conjugated iron-sulfur compound. The polypeptide is Iron-sulfur clusters transporter ATM1, mitochondrial (Candida albicans (strain SC5314 / ATCC MYA-2876) (Yeast)).